We begin with the raw amino-acid sequence, 203 residues long: Urease accessory protein UreG (203 aa).

10-17 contacts GTP; it reads GPVGAGKT.

The protein belongs to the SIMIBI class G3E GTPase family. UreG subfamily. Homodimer. UreD, UreF and UreG form a complex that acts as a GTP-hydrolysis-dependent molecular chaperone, activating the urease apoprotein by helping to assemble the nickel containing metallocenter of UreC. The UreE protein probably delivers the nickel.

The protein localises to the cytoplasm. Functionally, facilitates the functional incorporation of the urease nickel metallocenter. This process requires GTP hydrolysis, probably effectuated by UreG. This Kocuria rhizophila (strain ATCC 9341 / DSM 348 / NBRC 103217 / DC2201) protein is Urease accessory protein UreG.